The sequence spans 393 residues: S-adenosylmethionine synthase 3 (393 aa).

K(+) is bound at residue Glu-43. L-methionine contacts are provided by Glu-56 and Gln-99. Residues 167–169, 235–238, Asp-246, 252–253, Ala-269, Lys-273, and Lys-277 each bind ATP; these read DGK, SGRF, and RK. L-methionine is bound at residue Asp-246. Lys-277 provides a ligand contact to L-methionine.

Belongs to the AdoMet synthase family. Homotetramer. Mn(2+) serves as cofactor. Mg(2+) is required as a cofactor. It depends on Co(2+) as a cofactor. Requires K(+) as cofactor.

The protein resides in the cytoplasm. It catalyses the reaction L-methionine + ATP + H2O = S-adenosyl-L-methionine + phosphate + diphosphate. It participates in amino-acid biosynthesis; S-adenosyl-L-methionine biosynthesis; S-adenosyl-L-methionine from L-methionine: step 1/1. Its function is as follows. Catalyzes the formation of S-adenosylmethionine from methionine and ATP. The reaction comprises two steps that are both catalyzed by the same enzyme: formation of S-adenosylmethionine (AdoMet) and triphosphate, and subsequent hydrolysis of the triphosphate. This Actinidia chinensis var. chinensis (Chinese soft-hair kiwi) protein is S-adenosylmethionine synthase 3 (SAM3).